The sequence spans 368 residues: Probable dual-specificity RNA methyltransferase RlmN (368 aa).

The active-site Proton acceptor is the glutamate 109. In terms of domain architecture, Radical SAM core spans tyrosine 115 to glutamate 355. An intrachain disulfide couples cysteine 122 to cysteine 360. [4Fe-4S] cluster-binding residues include cysteine 129, cysteine 133, and cysteine 136. S-adenosyl-L-methionine is bound by residues glycine 184 to glutamate 185, serine 218, serine 241 to histidine 243, and asparagine 317. Residue cysteine 360 is the S-methylcysteine intermediate of the active site.

The protein belongs to the radical SAM superfamily. RlmN family. [4Fe-4S] cluster is required as a cofactor.

The protein localises to the cytoplasm. It carries out the reaction adenosine(2503) in 23S rRNA + 2 reduced [2Fe-2S]-[ferredoxin] + 2 S-adenosyl-L-methionine = 2-methyladenosine(2503) in 23S rRNA + 5'-deoxyadenosine + L-methionine + 2 oxidized [2Fe-2S]-[ferredoxin] + S-adenosyl-L-homocysteine. It catalyses the reaction adenosine(37) in tRNA + 2 reduced [2Fe-2S]-[ferredoxin] + 2 S-adenosyl-L-methionine = 2-methyladenosine(37) in tRNA + 5'-deoxyadenosine + L-methionine + 2 oxidized [2Fe-2S]-[ferredoxin] + S-adenosyl-L-homocysteine. Its function is as follows. Specifically methylates position 2 of adenine 2503 in 23S rRNA and position 2 of adenine 37 in tRNAs. The chain is Probable dual-specificity RNA methyltransferase RlmN from Streptomyces griseus subsp. griseus (strain JCM 4626 / CBS 651.72 / NBRC 13350 / KCC S-0626 / ISP 5235).